The primary structure comprises 456 residues: Chromosomal replication initiator protein DnaA (456 aa).

Residues 1–83 (MTASLWQQCL…LRFDIGNRPH (83 aa)) form a domain I, interacts with DnaA modulators region. The interval 83–119 (HPVAIARAPARGAAPVNNLQKSWESKADAKPEPNHKS) is domain II. A domain III, AAA+ region region spans residues 120–336 (NTNVNYTFEN…GALNRVIANA (217 aa)). 4 residues coordinate ATP: Gly-164, Gly-166, Lys-167, and Thr-168. The segment at 337–456 (NFTGRAINID…YSNLIRTLSS (120 aa)) is domain IV, binds dsDNA.

Belongs to the DnaA family. As to quaternary structure, oligomerizes as a right-handed, spiral filament on DNA at oriC.

It localises to the cytoplasm. Functionally, plays an essential role in the initiation and regulation of chromosomal replication. ATP-DnaA binds to the origin of replication (oriC) to initiate formation of the DNA replication initiation complex once per cell cycle. Binds the DnaA box (a 9 base pair repeat at the origin) and separates the double-stranded (ds)DNA. Forms a right-handed helical filament on oriC DNA; dsDNA binds to the exterior of the filament while single-stranded (ss)DNA is stabiized in the filament's interior. The ATP-DnaA-oriC complex binds and stabilizes one strand of the AT-rich DNA unwinding element (DUE), permitting loading of DNA polymerase. After initiation quickly degrades to an ADP-DnaA complex that is not apt for DNA replication. Binds acidic phospholipids. This Aeromonas salmonicida (strain A449) protein is Chromosomal replication initiator protein DnaA.